The following is a 186-amino-acid chain: ATP synthase subunit delta (186 aa).

Belongs to the ATPase delta chain family. As to quaternary structure, F-type ATPases have 2 components, F(1) - the catalytic core - and F(0) - the membrane proton channel. F(1) has five subunits: alpha(3), beta(3), gamma(1), delta(1), epsilon(1). F(0) has three main subunits: a(1), b(2) and c(10-14). The alpha and beta chains form an alternating ring which encloses part of the gamma chain. F(1) is attached to F(0) by a central stalk formed by the gamma and epsilon chains, while a peripheral stalk is formed by the delta and b chains.

The protein localises to the cell inner membrane. Its function is as follows. F(1)F(0) ATP synthase produces ATP from ADP in the presence of a proton or sodium gradient. F-type ATPases consist of two structural domains, F(1) containing the extramembraneous catalytic core and F(0) containing the membrane proton channel, linked together by a central stalk and a peripheral stalk. During catalysis, ATP synthesis in the catalytic domain of F(1) is coupled via a rotary mechanism of the central stalk subunits to proton translocation. In terms of biological role, this protein is part of the stalk that links CF(0) to CF(1). It either transmits conformational changes from CF(0) to CF(1) or is implicated in proton conduction. The polypeptide is ATP synthase subunit delta (Wolbachia sp. subsp. Drosophila simulans (strain wRi)).